The following is a 497-amino-acid chain: Thiamine transporter 1 (497 aa).

Met1 carries the post-translational modification N-acetylmethionine. The Cytoplasmic portion of the chain corresponds to 1–28 (MDVPGPVSRRAAAAAATVLLRTARVRRE). A helical membrane pass occupies residues 29–46 (CWFLPTALLCAYGFFASL). The Extracellular portion of the chain corresponds to 47–72 (RPSEPFLTPYLLGPDKNLTEREVFNE). Asn63 is a glycosylation site (N-linked (GlcNAc...) asparagine). A helical transmembrane segment spans residues 73-91 (IYPVWTYSYLVLLFPVFLA). Over 92-99 (TDYLRYKP) the chain is Cytoplasmic. A helical membrane pass occupies residues 100 to 118 (VVLLQGLSLIVTWFMLLYA). Residues 119–128 (QGLLAIQFLE) lie on the Extracellular side of the membrane. The helical transmembrane segment at 129–149 (FFYGIATATEIAYYSYIYSVV) threads the bilayer. Residues 150–165 (DLGMYQKVTSYCRSAT) lie on the Cytoplasmic side of the membrane. A helical transmembrane segment spans residues 166–185 (LVGFTVGSVLGQILVSVAGW). The Extracellular portion of the chain corresponds to 186 to 191 (SLFSLN). A helical membrane pass occupies residues 192 to 208 (VISLTCVSVAFAVAWFL). Residues 209 to 285 (PMPQKSLFFH…LLVLKVLWND (77 aa)) lie on the Cytoplasmic side of the membrane. Ser222 carries the phosphoserine modification. The chain crosses the membrane as a helical span at residues 286-310 (FLMCYSSRPLLCWSVWWALSTCGYF). The Extracellular segment spans residues 311 to 337 (QVVNYTQGLWEKVMPSRYAAIYNGGVE). Asn314 carries an N-linked (GlcNAc...) asparagine glycan. A helical transmembrane segment spans residues 338–354 (AVSTLLGAVAVFAVGYI). The Cytoplasmic portion of the chain corresponds to 355–363 (KISWSTWGE). The chain crosses the membrane as a helical span at residues 364 to 380 (MTLSLFSLLIAAAVYIM). The Extracellular portion of the chain corresponds to 381 to 386 (DTVGNI). A helical transmembrane segment spans residues 387 to 409 (WVCYASYVVFRIIYMLLITIATF). Topologically, residues 410 to 419 (QIAANLSMER) are cytoplasmic. The helical transmembrane segment at 420–443 (YALVFGVNTFIALALQTLLTLIVV) threads the bilayer. Over 444–455 (DASGLGLEITTQ) the chain is Extracellular. A helical transmembrane segment spans residues 456–479 (FLIYASYFALIAVVFLASGAVSVM). The Cytoplasmic portion of the chain corresponds to 480 to 497 (KKCRKLEDPQSSSQVTTS).

The protein belongs to the reduced folate carrier (RFC) transporter (TC 2.A.48) family. In terms of assembly, interacts with TSPAN1; this interaction increases the stability of SLC19A2. Interacts with TMEM63B. As to expression, ubiquitous; most abundant in skeletal and cardiac muscle. Medium expression in placenta, heart, liver and kidney, low in lung.

Its subcellular location is the cell membrane. It catalyses the reaction thiamine(out) + H(+)(in) = thiamine(in) + H(+)(out). The enzyme catalyses pyridoxine(out) + n H(+)(out) = pyridoxine(in) + n H(+)(in). With respect to regulation, pyridoxine transport is inhibited by carbonyl cyanide p-trifluoromethoxyphenylhydrazone (FCCP) and carbonyl cyanide m-chlorophenylhydrazone (CCCP). Its function is as follows. High-affinity transporter for the intake of thiamine. Mediates H(+)-dependent pyridoxine transport. This is Thiamine transporter 1 (SLC19A2) from Homo sapiens (Human).